We begin with the raw amino-acid sequence, 288 residues long: Rhox homeobox family member 2B (288 aa).

The tract at residues 16–136 (SPAVDDEKEL…GLEPGNAQQP (121 aa)) is disordered. Over residues 39–48 (VKEEEEDAQP) the composition is skewed to acidic residues. A compositionally biased stretch (basic and acidic residues) spans 68–80 (GEEKDGGGEEKDG). The segment at residues 134-193 (QQPNVHAFTPLQLQELECIFQREQFPSEFLRRRLARSMNVTELAVQIWFENRRAKWRRHQ) is a DNA-binding region (homeobox). Positions 186–195 (RAKWRRHQRA) match the Nuclear localization signal motif.

The protein belongs to the paired-like homeobox family. PEPP subfamily. In terms of tissue distribution, expressed in testis, mainly expressed in germ cells, but also detected in somatic cells such as Sertoli cells, Leydig cells and peritubular cells.

Its subcellular location is the nucleus. Transcription factor maybe involved in reproductive processes. Modulates expression of target genes encoding proteins involved in processes relevant to spermatogenesis. The polypeptide is Rhox homeobox family member 2B (Homo sapiens (Human)).